Here is a 1666-residue protein sequence, read N- to C-terminus: Latent-transforming growth factor beta-binding protein 4 (1666 aa).

The signal sequence occupies residues 1–24 (MRRPGLGGPCPLLLLLLLPAATSA). An EGF-like 1 domain is found at 148-180 (ARVLCPLICHNGGVCVKPDRCLCPPDFAGKFCQ). 6 disulfides stabilise this stretch: Cys-152–Cys-162, Cys-156–Cys-168, Cys-170–Cys-179, Cys-288–Cys-310, Cys-297–Cys-323, and Cys-311–Cys-326. The 53-residue stretch at 286-338 (GYCFRELRGSECASPLPGLRTQEVCCRGEGLAWGVHDCHPCAEHLRNSNQVSG) folds into the TB 1 domain. N-linked (GlcNAc...) asparagine glycosylation is present at Asn-351. The region spanning 356–396 (DVDECATGGRCQHGECANTRGGYTCVCPDGFLLDSSRSSCI) is the EGF-like 2; calcium-binding domain. Cystine bridges form between Cys-360–Cys-371, Cys-366–Cys-380, Cys-382–Cys-395, Cys-408–Cys-430, Cys-417–Cys-443, Cys-431–Cys-446, and Cys-432–Cys-458. In terms of domain architecture, TB 2 spans 406–458 (GPCYRVLHDGGCSLPILRNITKQICCCSRVGKAWGRGCQLCPPYGSEGFREIC). Residue Asn-424 is glycosylated (N-linked (GlcNAc...) asparagine). Residues 473 to 590 (YNTRPLNQDP…EIPESGPSSS (118 aa)) are disordered. Over residues 491-502 (RVPPATPRPPTG) the composition is skewed to pro residues. Positions 521–561 (PRPRPEPRPRPESRPRPEPRPRPEPRPQPESQPRPESRPRP) are enriched in basic and acidic residues. Over residues 562–573 (ESQPWPEFPLPS) the composition is skewed to pro residues. Residues 579–590 (GPEIPESGPSSS) are compositionally biased toward low complexity. Residues 588–629 (SSSMCQRNPQVCGPGRCVPRPSGYTCACDPGFRLGPQGTRCI) enclose the EGF-like 3 domain. 30 cysteine pairs are disulfide-bonded: Cys-592–Cys-604, Cys-599–Cys-613, Cys-615–Cys-628, Cys-634–Cys-646, Cys-641–Cys-655, Cys-657–Cys-670, Cys-676–Cys-688, Cys-683–Cys-697, Cys-699–Cys-712, Cys-718–Cys-730, Cys-725–Cys-739, Cys-741–Cys-750, Cys-757–Cys-769, Cys-764–Cys-778, Cys-780–Cys-793, Cys-799–Cys-811, Cys-806–Cys-820, Cys-822–Cys-835, Cys-881–Cys-893, Cys-887–Cys-902, Cys-904–Cys-918, Cys-924–Cys-936, Cys-930–Cys-945, Cys-947–Cys-960, Cys-966–Cys-977, Cys-972–Cys-986, Cys-988–Cys-1001, Cys-1095–Cys-1107, Cys-1101–Cys-1116, and Cys-1118–Cys-1131. The EGF-like 4; calcium-binding domain maps to 630–671 (DIDECRRVPTPCAPGRCENTPGSFRCVCGTGFQAGPRATECL). The EGF-like 5; calcium-binding domain occupies 672–713 (DVDECRRVPPPCDRGRCENTPGSFLCVCPAGYQAAPHGASCQ). An EGF-like 6; calcium-binding domain is found at 714 to 751 (DVDECTQSPGLCGRGVCENLPGSFRCVCPAGFRGSACE). The 42-residue stretch at 753–794 (DVDECAQQPPPCGPGRCDNTAGSFHCACPAGFRSRGPGAPCQ) folds into the EGF-like 7; calcium-binding domain. The region spanning 795 to 836 (DVDECSRSPSPCAYGRCENTEGSFKCVCPTGFQPNAAGSECE) is the EGF-like 8; calcium-binding domain. The 43-residue stretch at 877-919 (DVDECSSGTPCGLHGQCTNTKGSFHCSCSTGYRAPSGQPGPCA) folds into the EGF-like 9; calcium-binding domain. The region spanning 920–961 (DINECLEGDFCFPHGECLNTDGSFTCTCAPGYRPGPRGASCL) is the EGF-like 10; calcium-binding domain. The EGF-like 11; calcium-binding domain occupies 962 to 1002 (DVDECSEEDLCQSGICTNTDGSFECICPPGHRAGPDLASCL). The region spanning 1091 to 1132 (DVDECRNRSFCGAHAMCQNLPGSFQCVCDQGYEGARDGRHCV) is the EGF-like 12; calcium-binding domain. A glycan (N-linked (GlcNAc...) asparagine) is linked at Asn-1097. A disordered region spans residues 1171-1221 (TGRCVPPRAPAGTFPGSQPQAPASPSLPARPPAPPPPRRPSPPRQGPVSSG). Positions 1185-1197 (PGSQPQAPASPSL) are enriched in low complexity. Pro residues predominate over residues 1198–1215 (PARPPAPPPPRRPSPPRQ). Positions 1223–1277 (RECYFDTAAPDACDNILARNVTWQECCCTVGEGWGSGCRIQQCPGTETAEYQSLC) constitute a TB 3 domain. Disulfide bonds link Cys-1225–Cys-1248, Cys-1235–Cys-1260, Cys-1249–Cys-1265, Cys-1250–Cys-1277, Cys-1299–Cys-1312, Cys-1307–Cys-1321, Cys-1323–Cys-1336, Cys-1342–Cys-1354, Cys-1349–Cys-1363, and Cys-1365–Cys-1378. The N-linked (GlcNAc...) asparagine glycan is linked to Asn-1242. The 43-residue stretch at 1295 to 1337 (DVDECQLFQDQVCKSGVCVNTAPGYSCYCSNGFYYHAHRLECV) folds into the EGF-like 13; calcium-binding domain. The EGF-like 14; calcium-binding domain maps to 1338 to 1379 (DNDECADEEPACEGGRCVNTVGSYHCTCEPPLVLDGSRRRCV). An N-linked (GlcNAc...) asparagine glycan is attached at Asn-1381. The TB 4 domain maps to 1391-1444 (GVCWQEVGPDLVCSRPRLDRQATYTECCCLYGEAWGMDCALCPAQDSDDFEALC). 4 disulfide bridges follow: Cys-1393–Cys-1417, Cys-1403–Cys-1429, Cys-1418–Cys-1432, and Cys-1419–Cys-1444. A compositionally biased stretch (pro residues) spans 1488 to 1500 (VLPYDPYPPPPGP). Residues 1488–1566 (VLPYDPYPPP…SSERGSYTGA (79 aa)) form a disordered region. Position 1564 is a phosphothreonine (Thr-1564). EGF-like domains follow at residues 1575-1615 (EAEE…MSCV) and 1616-1660 (DVNE…HHCA). Cystine bridges form between Cys-1579–Cys-1590, Cys-1585–Cys-1599, Cys-1601–Cys-1614, Cys-1620–Cys-1635, Cys-1630–Cys-1644, and Cys-1646–Cys-1659.

This sequence belongs to the LTBP family. As to quaternary structure, forms part of the large latent transforming growth factor beta precursor complex; removal is essential for activation of complex. Interacts with LTBP1 and TGFB1. Interacts with EFEMP2; this interaction promotes fibrillar deposition of EFEMP2. Contains hydroxylated asparagine residues.

The protein resides in the secreted. The protein localises to the extracellular space. It localises to the extracellular matrix. Functionally, key regulator of transforming growth factor beta (TGFB1, TGFB2 and TGFB3) that controls TGF-beta activation by maintaining it in a latent state during storage in extracellular space. Associates specifically via disulfide bonds with the Latency-associated peptide (LAP), which is the regulatory chain of TGF-beta, and regulates integrin-dependent activation of TGF-beta. The sequence is that of Latent-transforming growth factor beta-binding protein 4 (Ltbp4) from Mus musculus (Mouse).